We begin with the raw amino-acid sequence, 319 residues long: Eukaryotic translation initiation factor 3 subunit H (319 aa).

An MPN domain is found at Val19–Phe153.

Belongs to the eIF-3 subunit H family. As to quaternary structure, component of the eukaryotic translation initiation factor 3 (eIF-3) complex.

The protein localises to the cytoplasm. Its function is as follows. Component of the eukaryotic translation initiation factor 3 (eIF-3) complex, which is involved in protein synthesis of a specialized repertoire of mRNAs and, together with other initiation factors, stimulates binding of mRNA and methionyl-tRNAi to the 40S ribosome. The eIF-3 complex specifically targets and initiates translation of a subset of mRNAs involved in cell proliferation. This chain is Eukaryotic translation initiation factor 3 subunit H (eif3H), found in Dictyostelium discoideum (Social amoeba).